Reading from the N-terminus, the 468-residue chain is 6-phospho-beta-galactosidase (468 aa).

Residues Q19, H116, N159, E160, and N297 each contribute to the D-galactose 6-phosphate site. Residue E160 is the Proton donor of the active site. The active-site Nucleophile is the E375. Positions 428, 429, 435, and 437 each coordinate D-galactose 6-phosphate.

This sequence belongs to the glycosyl hydrolase 1 family.

The catalysed reaction is a 6-phospho-beta-D-galactoside + H2O = D-galactose 6-phosphate + an alcohol. It functions in the pathway carbohydrate metabolism; lactose degradation; D-galactose 6-phosphate and beta-D-glucose from lactose 6-phosphate: step 1/1. This is 6-phospho-beta-galactosidase from Streptococcus pyogenes serotype M4 (strain MGAS10750).